The sequence spans 493 residues: MAGKVGKVSKKSDDVSSLAAKIRARALENQKKMQAASRKDSESDSSDEEVERPAKKQAKDEKVEEPEEEVTFESFAQLNLVPELIQACQNLNFTKPTPIQARAIPPALAGSDVIGLAQTGSGKTAAFAIPILNKLWEDQQPYYACVLAPTRELAQQIKETFDSLGSLMGVRTTCIVGGMNMMDQARDLMRKPHIIIATPGRLMDHLENTKGFSLKNLKFLVMDEADRLLDMEFGPVLDRILKIIPTKGRTTYLFSATMTSKIDKLQRASLTNPVKCAVSNKYQTVDTLVQTLMVVPGGLKNTFLIYLLNEFIGKTVIIFTRTKANAERLSGLCNLLEFSATALHGDLNQNQRTGALDLFKAGKRSILVATDVAARGLDIPSVDIVINYDIPVDSKSYIHRVGRTARAGRSGKSISLVSQYDLELILRIEEVLGKKLPKESVDKNIILTLRDSVDKANGEVVMEMNRRNKEKQARGKGRRGRMMAKENMDREEK.

Composition is skewed to basic and acidic residues over residues 26 to 42 and 51 to 62; these read ALEN…KDSE and ERPAKKQAKDEK. Positions 26–68 are disordered; it reads ALENQKKMQAASRKDSESDSSDEEVERPAKKQAKDEKVEEPEE. Positions 73-101 match the Q motif motif; sequence ESFAQLNLVPELIQACQNLNFTKPTPIQA. Residues 104 to 276 form the Helicase ATP-binding domain; sequence IPPALAGSDV…RASLTNPVKC (173 aa). 117–124 contacts ATP; sequence AQTGSGKT. Positions 223-226 match the DEAD box motif; the sequence is DEAD. In terms of domain architecture, Helicase C-terminal spans 307–453; the sequence is LLNEFIGKTV…NIILTLRDSV (147 aa). Residues 467–493 form a disordered region; the sequence is RNKEKQARGKGRRGRMMAKENMDREEK. Residues 483-493 show a composition bias toward basic and acidic residues; that stretch reads MAKENMDREEK.

Belongs to the DEAD box helicase family. DDX47/RRP3 subfamily. Interacts with the SSU processome.

It localises to the nucleus. It carries out the reaction ATP + H2O = ADP + phosphate + H(+). In terms of biological role, ATP-dependent rRNA helicase required for pre-ribosomal RNA processing. Involved in the maturation of the 35S-pre-rRNA and to its cleavage to mature 18S rRNA. The sequence is that of ATP-dependent rRNA helicase RRP3 from Candida glabrata (strain ATCC 2001 / BCRC 20586 / JCM 3761 / NBRC 0622 / NRRL Y-65 / CBS 138) (Yeast).